A 110-amino-acid polypeptide reads, in one-letter code: UPF0367 protein Syncc9605_2376 (110 aa).

The protein belongs to the UPF0367 family.

The polypeptide is UPF0367 protein Syncc9605_2376 (Synechococcus sp. (strain CC9605)).